The following is a 231-amino-acid chain: Ureidoacrylate amidohydrolase RutB (231 aa).

D25 (proton acceptor) is an active-site residue. K134 is a catalytic residue. C167 acts as the Nucleophile in catalysis.

It belongs to the isochorismatase family. RutB subfamily.

It catalyses the reaction (Z)-3-ureidoacrylate + H2O + H(+) = (Z)-3-aminoacrylate + NH4(+) + CO2. The catalysed reaction is (Z)-3-ureidoacrylate + H2O = (Z)-3-aminoacrylate + carbamate + H(+). The enzyme catalyses (Z)-2-methylureidoacrylate + H2O + H(+) = (Z)-2-methylaminoacrylate + NH4(+) + CO2. Its function is as follows. Hydrolyzes ureidoacrylate to form aminoacrylate and carbamate. The carbamate hydrolyzes spontaneously, thereby releasing one of the nitrogen atoms of the pyrimidine ring as ammonia and one of its carbon atoms as CO2. This is Ureidoacrylate amidohydrolase RutB from Escherichia coli O9:H4 (strain HS).